A 416-amino-acid chain; its full sequence is Serine hydroxymethyltransferase (416 aa).

Residues Leu121 and 125–127 (GHL) each bind (6S)-5,6,7,8-tetrahydrofolate. An N6-(pyridoxal phosphate)lysine modification is found at Lys229. (6S)-5,6,7,8-tetrahydrofolate contacts are provided by residues Glu245 and 354 to 356 (SPF).

Belongs to the SHMT family. In terms of assembly, homodimer. Pyridoxal 5'-phosphate is required as a cofactor.

It is found in the cytoplasm. The enzyme catalyses (6R)-5,10-methylene-5,6,7,8-tetrahydrofolate + glycine + H2O = (6S)-5,6,7,8-tetrahydrofolate + L-serine. Its pathway is one-carbon metabolism; tetrahydrofolate interconversion. The protein operates within amino-acid biosynthesis; glycine biosynthesis; glycine from L-serine: step 1/1. Catalyzes the reversible interconversion of serine and glycine with tetrahydrofolate (THF) serving as the one-carbon carrier. This reaction serves as the major source of one-carbon groups required for the biosynthesis of purines, thymidylate, methionine, and other important biomolecules. Also exhibits THF-independent aldolase activity toward beta-hydroxyamino acids, producing glycine and aldehydes, via a retro-aldol mechanism. The protein is Serine hydroxymethyltransferase of Aliivibrio fischeri (strain ATCC 700601 / ES114) (Vibrio fischeri).